The sequence spans 446 residues: tRNA modification GTPase MnmE (446 aa).

Arginine 22, glutamate 80, and arginine 119 together coordinate (6S)-5-formyl-5,6,7,8-tetrahydrofolate. The region spanning 215-370 is the TrmE-type G domain; it reads GFKVAIIGKP…LILALENIMN (156 aa). Residue asparagine 225 participates in K(+) binding. Residues 225 to 230, 244 to 250, and 269 to 272 each bind GTP; these read NVGKSS, SDIAGTT, and DTAG. Serine 229 contacts Mg(2+). Serine 244, isoleucine 246, and threonine 249 together coordinate K(+). Residue threonine 250 coordinates Mg(2+). Lysine 446 serves as a coordination point for (6S)-5-formyl-5,6,7,8-tetrahydrofolate.

This sequence belongs to the TRAFAC class TrmE-Era-EngA-EngB-Septin-like GTPase superfamily. TrmE GTPase family. As to quaternary structure, homodimer. Heterotetramer of two MnmE and two MnmG subunits. K(+) serves as cofactor.

The protein localises to the cytoplasm. Its function is as follows. Exhibits a very high intrinsic GTPase hydrolysis rate. Involved in the addition of a carboxymethylaminomethyl (cmnm) group at the wobble position (U34) of certain tRNAs, forming tRNA-cmnm(5)s(2)U34. The chain is tRNA modification GTPase MnmE from Sulfurimonas denitrificans (strain ATCC 33889 / DSM 1251) (Thiomicrospira denitrificans (strain ATCC 33889 / DSM 1251)).